Here is a 644-residue protein sequence, read N- to C-terminus: ATP-dependent zinc metalloprotease FtsH (644 aa).

Residues 1-13 (MANNDNKHRRSMS) are Cytoplasmic-facing. The chain crosses the membrane as a helical span at residues 14-34 (MLLYIAVAIFVYLLLSNTLLP). The Extracellular portion of the chain corresponds to 35–117 (GLLRQQIQTV…SIPDNSANML (83 aa)). A helical transmembrane segment spans residues 118–138 (MYALIQYGIPLIIFLGIGFFI). The Cytoplasmic segment spans residues 139-644 (NRSLKRAMGD…DEGSSTPSEE (506 aa)). Residue 224-231 (GPPGTGKT) coordinates ATP. His445 provides a ligand contact to Zn(2+). Glu446 is a catalytic residue. 2 residues coordinate Zn(2+): His449 and Asp522.

It in the central section; belongs to the AAA ATPase family. The protein in the C-terminal section; belongs to the peptidase M41 family. Homohexamer. The cofactor is Zn(2+).

The protein localises to the cell membrane. In terms of biological role, acts as a processive, ATP-dependent zinc metallopeptidase for both cytoplasmic and membrane proteins. Plays a role in the quality control of integral membrane proteins. This is ATP-dependent zinc metalloprotease FtsH from Lancefieldella parvula (strain ATCC 33793 / DSM 20469 / CCUG 32760 / JCM 10300 / KCTC 3663 / VPI 0546 / 1246) (Atopobium parvulum).